We begin with the raw amino-acid sequence, 487 residues long: E3 ubiquitin-protein ligase RNF8 (487 aa).

The FHA domain maps to 38–92 (VTIGRGFSVTYQLISKVCPLMISRNHCVLKQNPEGQWTIMDNKSLNGVWLNRERL). The segment at 68–72 (QNPEG) is required for interaction with PIWIL1. The disordered stretch occupies residues 135-195 (CLAPKNDHTT…PEKLHGKGEA (61 aa)). A Phosphoserine modification is found at S157. Residues 184-193 (AEPEKLHGKG) show a composition bias toward basic and acidic residues. The RING-type zinc finger occupies 405–443 (CIICSEYFIEAVTLNCAHSFCSFCISEWMKRKVECPICR).

It belongs to the RNF8 family. Homodimer. Forms a E2-E3 ubiquitin ligase complex composed of the RNF8 homodimer and a E2 heterodimer of UBE2N and UBE2V2. Interacts with class III E2s, including UBE2E1, UBE2E2, and UBE2E3 and with UBE2N. Interacts with RXRA. Interacts (via FHA domain) with phosphorylated HERC2 (via C-terminus). Interacts with PIWIL1; leading to sequester RNF8 in the cytoplasm. Interacts with WRAP53/TCAB1. Post-translationally, autoubiquitinated through 'Lys-48' and 'Lys-63' of ubiquitin. 'Lys-63' polyubiquitination is mediated by UBE2N. 'Lys-29'-type polyubiquitination is also observed, but it doesn't require its own functional RING-type zinc finger.

It localises to the nucleus. Its subcellular location is the cytoplasm. It is found in the midbody. The protein localises to the chromosome. The protein resides in the telomere. It catalyses the reaction S-ubiquitinyl-[E2 ubiquitin-conjugating enzyme]-L-cysteine + [acceptor protein]-L-lysine = [E2 ubiquitin-conjugating enzyme]-L-cysteine + N(6)-ubiquitinyl-[acceptor protein]-L-lysine.. It participates in protein modification; protein ubiquitination. Its function is as follows. E3 ubiquitin-protein ligase that plays a key role in DNA damage signaling via 2 distinct roles: by mediating the 'Lys-63'-linked ubiquitination of histones H2A and H2AX and promoting the recruitment of DNA repair proteins at double-strand breaks (DSBs) sites, and by catalyzing 'Lys-48'-linked ubiquitination to remove target proteins from DNA damage sites. Following DNA DSBs, it is recruited to the sites of damage by ATM-phosphorylated MDC1 and catalyzes the 'Lys-63'-linked ubiquitination of histones H2A and H2AX, thereby promoting the formation of TP53BP1 and BRCA1 ionizing radiation-induced foci (IRIF). Also controls the recruitment of UIMC1-BRCC3 (RAP80-BRCC36) and PAXIP1/PTIP to DNA damage sites. Promotes the recruitment of NBN to DNA damage sites by catalyzing 'Lys-6'-linked ubiquitination of NBN. Also recruited at DNA interstrand cross-links (ICLs) sites and catalyzes 'Lys-63'-linked ubiquitination of histones H2A and H2AX, leading to recruitment of FAAP20 and Fanconi anemia (FA) complex, followed by interstrand cross-link repair. H2A ubiquitination also mediates the ATM-dependent transcriptional silencing at regions flanking DSBs in cis, a mechanism to avoid collision between transcription and repair intermediates. Promotes the formation of 'Lys-63'-linked polyubiquitin chains via interactions with the specific ubiquitin-conjugating UBE2N/UBC13 and ubiquitinates non-histone substrates such as PCNA. Substrates that are polyubiquitinated at 'Lys-63' are usually not targeted for degradation. Also catalyzes the formation of 'Lys-48'-linked polyubiquitin chains via interaction with the ubiquitin-conjugating UBE2L6/UBCH8, leading to degradation of substrate proteins such as CHEK2, JMJD2A/KDM4A and KU80/XRCC5: it is still unclear how the preference toward 'Lys-48'- versus 'Lys-63'-linked ubiquitination is regulated but it could be due to RNF8 ability to interact with specific E2 specific ligases. For instance, interaction with phosphorylated HERC2 promotes the association between RNF8 and UBE2N/UBC13 and favors the specific formation of 'Lys-63'-linked ubiquitin chains. Promotes non-homologous end joining (NHEJ) by promoting the 'Lys-48'-linked ubiquitination and degradation the of KU80/XRCC5. Following DNA damage, mediates the ubiquitination and degradation of JMJD2A/KDM4A in collaboration with RNF168, leading to unmask H4K20me2 mark and promote the recruitment of TP53BP1 at DNA damage sites. Following DNA damage, mediates the ubiquitination and degradation of POLD4/p12, a subunit of DNA polymerase delta. In the absence of POLD4, DNA polymerase delta complex exhibits higher proofreading activity. In addition to its function in damage signaling, also plays a role in higher-order chromatin structure by mediating extensive chromatin decondensation. Involved in the activation of ATM by promoting histone H2B ubiquitination, which indirectly triggers histone H4 'Lys-16' acetylation (H4K16ac), establishing a chromatin environment that promotes efficient activation of ATM kinase. Required in the testis, where it plays a role in the replacement of histones during spermatogenesis. At uncapped telomeres, promotes the joining of deprotected chromosome ends by inducing H2A ubiquitination and TP53BP1 recruitment, suggesting that it may enhance cancer development by aggravating telomere-induced genome instability in case of telomeric crisis. Promotes the assembly of RAD51 at DNA DSBs in the absence of BRCA1 and TP53BP1 Also involved in class switch recombination in immune system, via its role in regulation of DSBs repair. May be required for proper exit from mitosis after spindle checkpoint activation and may regulate cytokinesis. May play a role in the regulation of RXRA-mediated transcriptional activity. Not involved in RXRA ubiquitination by UBE2E2. This Rattus norvegicus (Rat) protein is E3 ubiquitin-protein ligase RNF8.